A 329-amino-acid polypeptide reads, in one-letter code: Uroporphyrinogen decarboxylase (329 aa).

Residues 22 to 26, D71, Y140, S195, and H307 contribute to the substrate site; that span reads RQVGR.

It belongs to the uroporphyrinogen decarboxylase family. Homodimer.

The protein localises to the cytoplasm. It catalyses the reaction uroporphyrinogen III + 4 H(+) = coproporphyrinogen III + 4 CO2. It participates in porphyrin-containing compound metabolism; protoporphyrin-IX biosynthesis; coproporphyrinogen-III from 5-aminolevulinate: step 4/4. In terms of biological role, catalyzes the decarboxylation of four acetate groups of uroporphyrinogen-III to yield coproporphyrinogen-III. The protein is Uroporphyrinogen decarboxylase of Chlamydia pneumoniae (Chlamydophila pneumoniae).